The sequence spans 306 residues: N-acetylmuramic acid/N-acetylglucosamine kinase (306 aa).

ATP is bound at residue Ser-12. Asn-35 is a substrate binding site. Residue Thr-124 coordinates ATP. Substrate is bound by residues 142–144 and Asp-149; that span reads GWG. Ala-208 provides a ligand contact to ATP.

It belongs to the eukaryotic-type N-acetylglucosamine kinase family. The cofactor is Mg(2+).

Its subcellular location is the cytoplasm. The enzyme catalyses N-acetyl-D-glucosamine + ATP = N-acetyl-D-glucosamine 6-phosphate + ADP + H(+). It carries out the reaction N-acetyl-D-muramate + ATP = N-acetyl-D-muramate 6-phosphate + ADP + H(+). It functions in the pathway cell wall biogenesis; peptidoglycan recycling. Catalyzes the ATP-dependent phosphorylation of both cell wall (peptidoglycan) amino sugars, N-acetylmuramic acid (MurNAc) and N-acetylglucosamine (GlcNAc), at the 6-hydroxyl group. Neither the non-N-acetylated forms of the cell wall sugars, i.e., glucosamine and/or muramic acid, nor epimeric hexoses or 1,6-anhydro-MurNAc are substrates for the enzyme. May have a role in the rescue of the murein sugars GlcNAc and MurNAc released from muropeptides during cell wall turnover in C.acetobutylicum. This is N-acetylmuramic acid/N-acetylglucosamine kinase from Clostridium acetobutylicum (strain ATCC 824 / DSM 792 / JCM 1419 / IAM 19013 / LMG 5710 / NBRC 13948 / NRRL B-527 / VKM B-1787 / 2291 / W).